The chain runs to 1054 residues: Filament-like plant protein 6 (1054 aa).

3 coiled-coil regions span residues 64 to 139 (VQIK…VKQH), 174 to 200 (AEDRAAHLDGALKECMRQIRNLKKDHE), and 250 to 341 (SNML…RKKL). Disordered stretches follow at residues 359-390 (RDSGDARQKRSPVKVSSPCKSPGGYSSTGSEF) and 448-506 (EAQL…KEKD). 3 stretches are compositionally biased toward low complexity: residues 371–380 (VKVSSPCKSP), 450–461 (QLQQNNSQKSSL), and 470–494 (SNPSSSISVSEDGNDDSGSCSGSLS). The stretch at 389–463 (EFSLDNAQKF…NNSQKSSLEV (75 aa)) forms a coiled coil. Coiled coils occupy residues 637–666 (QNLVEDCHLAEQKLQSIHQDLKNAVSRIHD) and 788–944 (ESDS…IFVL). The interval 951–1054 (FRPQPEQMRS…SRFFSSKSGY (104 aa)) is disordered. Positions 1007–1032 (PSDSETSDTTTSPSRVGSRLSRSGSS) are enriched in low complexity.

This sequence belongs to the FPP family. In terms of assembly, interacts with WPP/MAF proteins.

This chain is Filament-like plant protein 6 (FPP6), found in Arabidopsis thaliana (Mouse-ear cress).